The primary structure comprises 545 residues: Chaperonin GroEL 3 (545 aa).

Residues T29–P32, D86–T90, G413, D479–V481, and D495 contribute to the ATP site. The tract at residues D526–Y545 is disordered. Over residues V535–Y545 the composition is skewed to gly residues.

Belongs to the chaperonin (HSP60) family. In terms of assembly, forms a cylinder of 14 subunits composed of two heptameric rings stacked back-to-back. Interacts with the co-chaperonin GroES.

It localises to the cytoplasm. The enzyme catalyses ATP + H2O + a folded polypeptide = ADP + phosphate + an unfolded polypeptide.. Functionally, together with its co-chaperonin GroES, plays an essential role in assisting protein folding. The GroEL-GroES system forms a nano-cage that allows encapsulation of the non-native substrate proteins and provides a physical environment optimized to promote and accelerate protein folding. The sequence is that of Chaperonin GroEL 3 from Trichormus variabilis (strain ATCC 29413 / PCC 7937) (Anabaena variabilis).